A 386-amino-acid polypeptide reads, in one-letter code: Synaptotagmin-5 (386 aa).

The segment covering 1-16 (MFPEPPTPGPPSPDTP) has biased composition (pro residues). Residues 1-23 (MFPEPPTPGPPSPDTPPDSSRIS) are disordered. The Vesicular portion of the chain corresponds to 1-24 (MFPEPPTPGPPSPDTPPDSSRISH). A helical transmembrane segment spans residues 25–45 (GPVPPWALATIVLVSGLLIFS). The Cytoplasmic portion of the chain corresponds to 46–386 (CCFCLYRKSC…PDRVRLLPAP (341 aa)). C2 domains follow at residues 108–227 (ELGR…QAWR) and 239–372 (KLGD…AQWH). Ca(2+) contacts are provided by Leu-138, Asp-139, Asp-145, Asp-197, Phe-198, Asp-199, Ser-202, Asp-205, Asp-270, Asp-276, Asp-330, and Asp-332.

The protein belongs to the synaptotagmin family. Homodimer. Interacts with both alpha- and beta-tubulin. The cofactor is Ca(2+).

The protein resides in the cytoplasmic vesicle. It localises to the secretory vesicle. It is found in the synaptic vesicle membrane. The protein localises to the recycling endosome membrane. In terms of biological role, may be involved in Ca(2+)-dependent exocytosis of secretory vesicles through Ca(2+) and phospholipid binding to the C2 domain or may serve as Ca(2+) sensors in the process of vesicular trafficking and exocytosis. Regulates the Ca(2+)-dependent secretion of norepinephrine in PC12 cells. Required for export from the endocytic recycling compartment to the cell surface. The chain is Synaptotagmin-5 (SYT5) from Homo sapiens (Human).